The following is a 281-amino-acid chain: LIM domain-containing protein G (281 aa).

LIM zinc-binding domains lie at 40–101, 141–205, and 206–262; these read LNCS…IKFN, DICT…SKQV, and NCFA…FTQP.

In Dictyostelium discoideum (Social amoeba), this protein is LIM domain-containing protein G (limG).